Consider the following 890-residue polypeptide: Leucine--tRNA ligase (890 aa).

Residues 48–58 (PYPSGKLHMGH) carry the 'HIGH' region motif. Residues 645–649 (KMSKS) carry the 'KMSKS' region motif. ATP is bound at residue Lys-648.

The protein belongs to the class-I aminoacyl-tRNA synthetase family.

It localises to the cytoplasm. It carries out the reaction tRNA(Leu) + L-leucine + ATP = L-leucyl-tRNA(Leu) + AMP + diphosphate. This chain is Leucine--tRNA ligase, found in Polynucleobacter asymbioticus (strain DSM 18221 / CIP 109841 / QLW-P1DMWA-1) (Polynucleobacter necessarius subsp. asymbioticus).